Reading from the N-terminus, the 164-residue chain is 3-isopropylmalate dehydratase small subunit (164 aa).

Belongs to the LeuD family. LeuD type 2 subfamily. In terms of assembly, heterodimer of LeuC and LeuD.

It carries out the reaction (2R,3S)-3-isopropylmalate = (2S)-2-isopropylmalate. It participates in amino-acid biosynthesis; L-leucine biosynthesis; L-leucine from 3-methyl-2-oxobutanoate: step 2/4. Its function is as follows. Catalyzes the isomerization between 2-isopropylmalate and 3-isopropylmalate, via the formation of 2-isopropylmaleate. This is 3-isopropylmalate dehydratase small subunit from Syntrophus aciditrophicus (strain SB).